Reading from the N-terminus, the 225-residue chain is 3-dehydroquinate dehydratase (225 aa).

3-dehydroquinate-binding positions include S6, 30–32 (EWR), and R62. The Proton donor/acceptor role is filled by H118. K143 acts as the Schiff-base intermediate with substrate in catalysis. R186, S205, and Q209 together coordinate 3-dehydroquinate.

Belongs to the type-I 3-dehydroquinase family. Homodimer.

The enzyme catalyses 3-dehydroquinate = 3-dehydroshikimate + H2O. The protein operates within metabolic intermediate biosynthesis; chorismate biosynthesis; chorismate from D-erythrose 4-phosphate and phosphoenolpyruvate: step 3/7. Functionally, involved in the third step of the chorismate pathway, which leads to the biosynthesis of aromatic amino acids. Catalyzes the cis-dehydration of 3-dehydroquinate (DHQ) and introduces the first double bond of the aromatic ring to yield 3-dehydroshikimate. This is 3-dehydroquinate dehydratase from Streptococcus pneumoniae (strain ATCC 700669 / Spain 23F-1).